The chain runs to 380 residues: Flap endonuclease 1 (380 aa).

The N-domain stretch occupies residues 1-104; sequence MGIKGLSQLI…GELTKRAEKR (104 aa). Mg(2+) is bound at residue Asp-34. DNA is bound by residues Arg-47 and Arg-70. Mg(2+) contacts are provided by Asp-86, Glu-158, Glu-160, Asp-179, and Asp-181. The tract at residues 122-253 is I-domain; it reads DIDKFNRRLV…KKAVELINKH (132 aa). Glu-158 lines the DNA pocket. Residues Gly-231 and Asp-233 each coordinate DNA. A Mg(2+)-binding site is contributed by Asp-233. An interaction with PCNA region spans residues 336–344; sequence TQGRLDSFF. Residues 342-380 form a disordered region; sequence SFFKVLPSTPNPKRKIEDKKTPASKKAKTTGGKPGRKPK. Positions 363–380 are enriched in basic residues; sequence PASKKAKTTGGKPGRKPK.

It belongs to the XPG/RAD2 endonuclease family. FEN1 subfamily. Interacts with PCNA. Three molecules of FEN1 bind to one PCNA trimer with each molecule binding to one PCNA monomer. PCNA stimulates the nuclease activity without altering cleavage specificity. It depends on Mg(2+) as a cofactor. Phosphorylated. Phosphorylation upon DNA damage induces relocalization to the nuclear plasma.

It is found in the nucleus. It localises to the nucleolus. The protein resides in the nucleoplasm. The protein localises to the mitochondrion. In terms of biological role, structure-specific nuclease with 5'-flap endonuclease and 5'-3' exonuclease activities involved in DNA replication and repair. During DNA replication, cleaves the 5'-overhanging flap structure that is generated by displacement synthesis when DNA polymerase encounters the 5'-end of a downstream Okazaki fragment. It enters the flap from the 5'-end and then tracks to cleave the flap base, leaving a nick for ligation. Also involved in the long patch base excision repair (LP-BER) pathway, by cleaving within the apurinic/apyrimidinic (AP) site-terminated flap. Acts as a genome stabilization factor that prevents flaps from equilibrating into structures that lead to duplications and deletions. Also possesses 5'-3' exonuclease activity on nicked or gapped double-stranded DNA, and exhibits RNase H activity. Also involved in replication and repair of rDNA and in repairing mitochondrial DNA. The chain is Flap endonuclease 1 from Aedes aegypti (Yellowfever mosquito).